We begin with the raw amino-acid sequence, 144 residues long: Fluoride-specific ion channel FluC (144 aa).

The next 4 membrane-spanning stretches (helical) occupy residues 7–27, 33–53, 71–91, and 105–125; these read LIVMVGGALGTLARYLVSVAA, FIPWGTILPINALGSFVIGFF, LFVMIGLCGGYTTFSSFSLQT, and VNVAASVILCIGAVALGHITA. The Na(+) site is built by Gly79 and Thr82.

Belongs to the fluoride channel Fluc/FEX (TC 1.A.43) family.

The protein resides in the cell inner membrane. The enzyme catalyses fluoride(in) = fluoride(out). Na(+) is not transported, but it plays an essential structural role and its presence is essential for fluoride channel function. Its function is as follows. Fluoride-specific ion channel. Important for reducing fluoride concentration in the cell, thus reducing its toxicity. The chain is Fluoride-specific ion channel FluC from Gluconobacter oxydans (strain 621H) (Gluconobacter suboxydans).